The sequence spans 153 residues: Large ribosomal subunit protein bL9 (153 aa).

The protein belongs to the bacterial ribosomal protein bL9 family.

Binds to the 23S rRNA. This chain is Large ribosomal subunit protein bL9, found in Mycoplasma mycoides subsp. mycoides SC (strain CCUG 32753 / NCTC 10114 / PG1).